Here is a 128-residue protein sequence, read N- to C-terminus: Large ribosomal subunit protein bL12 (128 aa).

The protein belongs to the bacterial ribosomal protein bL12 family. In terms of assembly, homodimer. Part of the ribosomal stalk of the 50S ribosomal subunit. Forms a multimeric L10(L12)X complex, where L10 forms an elongated spine to which 2 to 4 L12 dimers bind in a sequential fashion. Binds GTP-bound translation factors.

In terms of biological role, forms part of the ribosomal stalk which helps the ribosome interact with GTP-bound translation factors. Is thus essential for accurate translation. This chain is Large ribosomal subunit protein bL12, found in Corynebacterium aurimucosum (strain ATCC 700975 / DSM 44827 / CIP 107346 / CN-1) (Corynebacterium nigricans).